The following is a 278-amino-acid chain: Large ribosomal subunit protein uL2 (278 aa).

The disordered stretch occupies residues Gly-223–Lys-278. Over residues Thr-255–Lys-264 the composition is skewed to basic residues.

It belongs to the universal ribosomal protein uL2 family. As to quaternary structure, part of the 50S ribosomal subunit. Forms a bridge to the 30S subunit in the 70S ribosome.

Its function is as follows. One of the primary rRNA binding proteins. Required for association of the 30S and 50S subunits to form the 70S ribosome, for tRNA binding and peptide bond formation. It has been suggested to have peptidyltransferase activity; this is somewhat controversial. Makes several contacts with the 16S rRNA in the 70S ribosome. This is Large ribosomal subunit protein uL2 from Lacticaseibacillus paracasei (strain ATCC 334 / BCRC 17002 / CCUG 31169 / CIP 107868 / KCTC 3260 / NRRL B-441) (Lactobacillus paracasei).